The sequence spans 168 residues: Nicotinamide-nucleotide adenylyltransferase (168 aa).

The protein belongs to the archaeal NMN adenylyltransferase family.

The protein localises to the cytoplasm. It carries out the reaction beta-nicotinamide D-ribonucleotide + ATP + H(+) = diphosphate + NAD(+). The protein operates within cofactor biosynthesis; NAD(+) biosynthesis; NAD(+) from nicotinamide D-ribonucleotide: step 1/1. The polypeptide is Nicotinamide-nucleotide adenylyltransferase (Methanoculleus marisnigri (strain ATCC 35101 / DSM 1498 / JR1)).